The primary structure comprises 192 residues: Orotate phosphoribosyltransferase (192 aa).

Position 116 to 124 (116 to 124 (EDIVTTGLS)) interacts with 5-phospho-alpha-D-ribose 1-diphosphate. 2 residues coordinate orotate: T120 and R148.

The protein belongs to the purine/pyrimidine phosphoribosyltransferase family. PyrE subfamily. Homodimer. Requires Mg(2+) as cofactor.

The enzyme catalyses orotidine 5'-phosphate + diphosphate = orotate + 5-phospho-alpha-D-ribose 1-diphosphate. The protein operates within pyrimidine metabolism; UMP biosynthesis via de novo pathway; UMP from orotate: step 1/2. Functionally, catalyzes the transfer of a ribosyl phosphate group from 5-phosphoribose 1-diphosphate to orotate, leading to the formation of orotidine monophosphate (OMP). The chain is Orotate phosphoribosyltransferase from Brucella anthropi (strain ATCC 49188 / DSM 6882 / CCUG 24695 / JCM 21032 / LMG 3331 / NBRC 15819 / NCTC 12168 / Alc 37) (Ochrobactrum anthropi).